We begin with the raw amino-acid sequence, 446 residues long: MSSSLANRNIYTVSRLNSEVRLLLENEMGIVWLVGEISNFSAPVSGHWYLTLKDSQAQVKCAMFKGNNRLVNFKPQNGQQVLVKARLSLYEPRGDYQIILESMQPEGDGRLQQQFEQLKMQLAAEGLFAQTRKKPLPENPRCVGIITSRTGAALHDILHVLKRRDPNLPVVIYPTLVQGEEAAIQIAQAIGRANTRAECDVLIVGRGGGSLEDLWCFNHEIVARTIAASEIPIISAVGHEIDVTIADFVADVRAPTPSAAAELVSRDHRHKQQALHQWQAKLASTMRHYLAQQETQFARLQHKLDKQHPQARLERQQQQLDELSLRLEQKMQQRLATQQQRWDRLSHKIELHSPIHLIRQQRFNLIQQEQRINQSIQRYLIQSRHQLALLSEKLDAVSPLAALARGYSVTRTTQGELVRQSAQVKPGDTLVTQLMDGEILSTVNSR.

It belongs to the XseA family. As to quaternary structure, heterooligomer composed of large and small subunits.

It localises to the cytoplasm. It catalyses the reaction Exonucleolytic cleavage in either 5'- to 3'- or 3'- to 5'-direction to yield nucleoside 5'-phosphates.. Its function is as follows. Bidirectionally degrades single-stranded DNA into large acid-insoluble oligonucleotides, which are then degraded further into small acid-soluble oligonucleotides. The polypeptide is Exodeoxyribonuclease 7 large subunit (Vibrio cholerae serotype O1 (strain ATCC 39541 / Classical Ogawa 395 / O395)).